The following is a 236-amino-acid chain: Orotidine 5'-phosphate decarboxylase (236 aa).

Substrate-binding positions include D14, K36, 63–72 (DLKFHDIPNT), T122, R183, Q192, G212, and R213. K65 acts as the Proton donor in catalysis.

Belongs to the OMP decarboxylase family. Type 1 subfamily. As to quaternary structure, homodimer.

It catalyses the reaction orotidine 5'-phosphate + H(+) = UMP + CO2. It functions in the pathway pyrimidine metabolism; UMP biosynthesis via de novo pathway; UMP from orotate: step 2/2. Its function is as follows. Catalyzes the decarboxylation of orotidine 5'-monophosphate (OMP) to uridine 5'-monophosphate (UMP). The protein is Orotidine 5'-phosphate decarboxylase of Chromohalobacter salexigens (strain ATCC BAA-138 / DSM 3043 / CIP 106854 / NCIMB 13768 / 1H11).